Here is a 198-residue protein sequence, read N- to C-terminus: Dephospho-CoA kinase (198 aa).

The DPCK domain maps to 4–198; the sequence is FLGLTGGIAS…LSDLLQEIGR (195 aa). Residue 12–17 participates in ATP binding; the sequence is ASGKST.

This sequence belongs to the CoaE family.

Its subcellular location is the cytoplasm. It carries out the reaction 3'-dephospho-CoA + ATP = ADP + CoA + H(+). Its pathway is cofactor biosynthesis; coenzyme A biosynthesis; CoA from (R)-pantothenate: step 5/5. In terms of biological role, catalyzes the phosphorylation of the 3'-hydroxyl group of dephosphocoenzyme A to form coenzyme A. This chain is Dephospho-CoA kinase, found in Lactobacillus johnsonii (strain CNCM I-12250 / La1 / NCC 533).